The chain runs to 254 residues: Alcohol dehydrogenase 2 (254 aa).

10-33 provides a ligand contact to NAD(+); sequence FVAGLGGIGFDTSREIVKRGPKNL. Substrate is bound at residue S138. Y151 acts as the Proton acceptor in catalysis.

This sequence belongs to the short-chain dehydrogenases/reductases (SDR) family. Homodimer.

The enzyme catalyses a primary alcohol + NAD(+) = an aldehyde + NADH + H(+). The catalysed reaction is a secondary alcohol + NAD(+) = a ketone + NADH + H(+). The chain is Alcohol dehydrogenase 2 (Adh2) from Drosophila mojavensis (Fruit fly).